The following is a 453-amino-acid chain: Secreted aspartic protease 10 (453 aa).

Positions 1–20 (MDLVIMNFVFLLYLTSVVKC) are cleaved as a signal peptide. Residues 52–372 (YTTELEIGSN…DLQDMTISVA (321 aa)) enclose the Peptidase A1 domain. Asp-70 is an active-site residue. 70–72 (DTG) is a pepstatin A binding site. Cys-85 and Cys-112 are joined by a disulfide. 2 N-linked (GlcNAc...) asparagine glycosylation sites follow: Asn-115 and Asn-128. 138-139 (VD) lines the pepstatin A pocket. N-linked (GlcNAc...) asparagine glycans are attached at residues Asn-168, Asn-208, Asn-211, and Asn-245. Asp-266 is an active-site residue. 266–270 (DTGST) contacts pepstatin A. N-linked (GlcNAc...) asparagine glycosylation occurs at Asn-287. Cys-301 and Cys-333 are joined by a disulfide. The disordered stretch occupies residues 387-432 (NPNEDQNEVPTSTSFTQSASSSGSQPSSTISGENMDKNTTSSSSGN). The span at 397–417 (TSTSFTQSASSSGSQPSSTIS) shows a compositional bias: low complexity. A compositionally biased stretch (polar residues) spans 423 to 432 (KNTTSSSSGN). Asn-424 carries an N-linked (GlcNAc...) asparagine glycan. A lipid anchor (GPI-anchor amidated serine) is attached at Ser-429. Positions 430 to 453 (SGNCQTRSWIAILSALFLVYIHII) are cleaved as a propeptide — removed in mature form.

The protein belongs to the peptidase A1 family. The GPI-anchor is attached to the protein in the endoplasmic reticulum and serves to target the protein to the cell surface. There, the glucosamine-inositol phospholipid moiety is cleaved off and the GPI-modified mannoprotein is covalently attached via its lipidless GPI glycan remnant to the 1,6-beta-glucan of the outer cell wall layer.

It is found in the secreted. Its subcellular location is the cell membrane. The catalysed reaction is Preferential cleavage at the carboxyl of hydrophobic amino acids, but fails to cleave 15-Leu-|-Tyr-16, 16-Tyr-|-Leu-17 and 24-Phe-|-Phe-25 of insulin B chain. Activates trypsinogen, and degrades keratin.. Functionally, secreted aspartic peptidases (SAPs) are a group of ten acidic hydrolases considered as key virulence factors. These enzymes supply the fungus with nutrient amino acids as well as are able to degrade the selected host's proteins involved in the immune defense. Required for cell surface integrity and cell separation during budding. In Candida albicans (strain SC5314 / ATCC MYA-2876) (Yeast), this protein is Secreted aspartic protease 10.